A 116-amino-acid chain; its full sequence is Host cell factor C1 regulator 1 (116 aa).

A disordered region spans residues 1–22 (MILQQPLERGPPGRDPRATTGV). Residues 54–57 (DHPY) form an interaction with HCFC1 region. Residues 88 to 97 (IPEALRLLRL) carry the Nuclear export signal motif.

Interacts with HCFC1.

The protein resides in the cytoplasm. The protein localises to the nucleus. Functionally, regulates HCFC1 activity by modulating its subcellular localization. Overexpression of HCFC1R1 leads to accumulation of HCFC1 in the cytoplasm. HCFC1R1-mediated export may provide the pool of cytoplasmic HCFC1 required for import of virion-derived VP16 into the nucleus. The polypeptide is Host cell factor C1 regulator 1 (Hcfc1r1) (Rattus norvegicus (Rat)).